A 151-amino-acid polypeptide reads, in one-letter code: Large ribosomal subunit protein uL15 (151 aa).

A disordered region spans residues Met1 to Leu60.

The protein belongs to the universal ribosomal protein uL15 family. In terms of assembly, part of the 50S ribosomal subunit.

In terms of biological role, binds to the 23S rRNA. The polypeptide is Large ribosomal subunit protein uL15 (Streptomyces griseus subsp. griseus (strain JCM 4626 / CBS 651.72 / NBRC 13350 / KCC S-0626 / ISP 5235)).